Here is a 201-residue protein sequence, read N- to C-terminus: 8-oxoguanine DNA glycosylase/AP lyase (201 aa).

Catalysis depends on residues Lys126 and Asp144.

This sequence belongs to the type-2 OGG1 family.

It catalyses the reaction 2'-deoxyribonucleotide-(2'-deoxyribose 5'-phosphate)-2'-deoxyribonucleotide-DNA = a 3'-end 2'-deoxyribonucleotide-(2,3-dehydro-2,3-deoxyribose 5'-phosphate)-DNA + a 5'-end 5'-phospho-2'-deoxyribonucleoside-DNA + H(+). Functionally, catalyzes the excision of an oxidatively damaged form of guanine (7,8-dihydro-8-oxoguanine = 8-oxoG) from DNA. Also cleaves the DNA backbone at apurinic/apyrimidinic sites (AP sites). The polypeptide is 8-oxoguanine DNA glycosylase/AP lyase (Metallosphaera sedula (strain ATCC 51363 / DSM 5348 / JCM 9185 / NBRC 15509 / TH2)).